A 356-amino-acid polypeptide reads, in one-letter code: UDP-N-acetylglucosamine--N-acetylmuramyl-(pentapeptide) pyrophosphoryl-undecaprenol N-acetylglucosamine transferase (356 aa).

Residues 12-14, arginine 166, serine 196, and glutamine 291 contribute to the UDP-N-acetyl-alpha-D-glucosamine site; that span reads TAG.

Belongs to the glycosyltransferase 28 family. MurG subfamily.

The protein resides in the cell membrane. The enzyme catalyses di-trans,octa-cis-undecaprenyl diphospho-N-acetyl-alpha-D-muramoyl-L-alanyl-D-glutamyl-meso-2,6-diaminopimeloyl-D-alanyl-D-alanine + UDP-N-acetyl-alpha-D-glucosamine = di-trans,octa-cis-undecaprenyl diphospho-[N-acetyl-alpha-D-glucosaminyl-(1-&gt;4)]-N-acetyl-alpha-D-muramoyl-L-alanyl-D-glutamyl-meso-2,6-diaminopimeloyl-D-alanyl-D-alanine + UDP + H(+). The protein operates within cell wall biogenesis; peptidoglycan biosynthesis. Its function is as follows. Cell wall formation. Catalyzes the transfer of a GlcNAc subunit on undecaprenyl-pyrophosphoryl-MurNAc-pentapeptide (lipid intermediate I) to form undecaprenyl-pyrophosphoryl-MurNAc-(pentapeptide)GlcNAc (lipid intermediate II). The chain is UDP-N-acetylglucosamine--N-acetylmuramyl-(pentapeptide) pyrophosphoryl-undecaprenol N-acetylglucosamine transferase from Geobacillus thermodenitrificans (strain NG80-2).